Here is a 158-residue protein sequence, read N- to C-terminus: Transcription factor BTF3 homolog 4 (158 aa).

In terms of domain architecture, NAC-A/B spans 33-98 (TADDKKLQSS…AEVKQITEML (66 aa)). Residues 123–158 (QVLDSKASKPEDIEEEDDDVPELVGNFDEASKNEAN) are disordered. Over residues 134 to 143 (DIEEEDDDVP) the composition is skewed to acidic residues.

The protein belongs to the NAC-beta family.

The polypeptide is Transcription factor BTF3 homolog 4 (btf3l4) (Xenopus laevis (African clawed frog)).